Here is a 115-residue protein sequence, read N- to C-terminus: MDDMSLKKGKEFEERASKFLKKQGYKILARNVRYSFGELDIVARKGKTLVFVEVKGGNPDFPPRMRVDRAKLRRLELAAYKYIKDFSPKFEESRLDVIEVLSNGEINHLKGVGRW.

The protein belongs to the UPF0102 family.

This chain is UPF0102 protein Kole_1919, found in Kosmotoga olearia (strain ATCC BAA-1733 / DSM 21960 / TBF 19.5.1).